A 130-amino-acid chain; its full sequence is Small ribosomal subunit protein uS8 (130 aa).

It belongs to the universal ribosomal protein uS8 family. As to quaternary structure, part of the 30S ribosomal subunit.

One of the primary rRNA binding proteins, it binds directly to 16S rRNA central domain where it helps coordinate assembly of the platform of the 30S subunit. The chain is Small ribosomal subunit protein uS8 from Methanosarcina barkeri (strain Fusaro / DSM 804).